Here is a 258-residue protein sequence, read N- to C-terminus: Chaperone protein FaeE (258 aa).

Residues 1–34 form the signal peptide; it reads MSKRNAVTTFFTNRVTKALGMTLALMMTCQSAMA. Positions 239-258 are disordered; the sequence is KKPAAPEAAKAEKADTAEQK. Residues 247-258 are compositionally biased toward basic and acidic residues; that stretch reads AKAEKADTAEQK.

This sequence belongs to the periplasmic pilus chaperone family.

It is found in the periplasm. Its function is as follows. Mediates assembly of pili by forming soluble multimeric complexes with pili subunits as an intermediate step in the assembly process. This protein is involved in K88 pili assembly. Protects pilin protein from proteolytic degradation by DegP and from premature polymerization. The chain is Chaperone protein FaeE (faeE) from Escherichia coli.